A 73-amino-acid chain; its full sequence is DNA-directed RNA polymerase subunit omega (73 aa).

It belongs to the RNA polymerase subunit omega family. As to quaternary structure, in cyanobacteria the RNAP catalytic core is composed of 2 alpha, 1 beta, 1 beta', 1 gamma and 1 omega subunit. When a sigma factor is associated with the core the holoenzyme is formed, which can initiate transcription.

It carries out the reaction RNA(n) + a ribonucleoside 5'-triphosphate = RNA(n+1) + diphosphate. Its function is as follows. Promotes RNA polymerase assembly. Latches the N- and C-terminal regions of the beta' subunit thereby facilitating its interaction with the beta and alpha subunits. This Gloeobacter violaceus (strain ATCC 29082 / PCC 7421) protein is DNA-directed RNA polymerase subunit omega.